Here is a 920-residue protein sequence, read N- to C-terminus: Bifunctional aspartokinase/homoserine dehydrogenase 1, chloroplastic (920 aa).

Residues 1 to 21 (MRSLTVASRHPGAAFSTRRRP) are disordered. The transit peptide at 1–92 (MRSLTVASRH…EAIADLPKGD (92 aa)) directs the protein to the chloroplast. Residues 93–341 (MWSVHKFGGT…VSEAVILSTL (249 aa)) are aspartokinase. Positions 342–566 (SYQEAWEMSY…LSKTTLAVGI (225 aa)) are interface. ACT domains are found at residues 416 to 491 (VEGT…VIHN) and 497 to 574 (TVGL…LIGR). The interval 567 to 920 (IGPGLIGRTL…RLSSYLGAPS (354 aa)) is homoserine dehydrogenase. The NAD(+) site is built by Ile-572 and Ala-601. Ile-572 is an NADP(+) binding site. Ile-572 lines the NADPH pocket. NADP(+) is bound by residues Arg-604, Thr-653, and Lys-677. NAD(+) is bound at residue Thr-653. NADPH contacts are provided by Thr-653 and Lys-677. The Na(+) site is built by Glu-704, Val-707, Ala-709, and Leu-711. Residues Gly-762 and Glu-765 each coordinate NADP(+). Residues Glu-765 and Asp-776 each coordinate L-homoserine. Lys-780 serves as the catalytic Proton donor. An NAD(+)-binding site is contributed by Gly-897. Gly-897 is a binding site for NADP(+). Residue Gly-897 coordinates NADPH.

The protein in the N-terminal section; belongs to the aspartokinase family. In the C-terminal section; belongs to the homoserine dehydrogenase family. Homo- or heterodimer. The cofactor is a metal cation.

Its subcellular location is the plastid. The protein resides in the chloroplast. It catalyses the reaction L-homoserine + NADP(+) = L-aspartate 4-semialdehyde + NADPH + H(+). The catalysed reaction is L-homoserine + NAD(+) = L-aspartate 4-semialdehyde + NADH + H(+). It carries out the reaction L-aspartate + ATP = 4-phospho-L-aspartate + ADP. The protein operates within amino-acid biosynthesis; L-lysine biosynthesis via DAP pathway; (S)-tetrahydrodipicolinate from L-aspartate: step 1/4. It functions in the pathway amino-acid biosynthesis; L-methionine biosynthesis via de novo pathway; L-homoserine from L-aspartate: step 1/3. Its pathway is amino-acid biosynthesis; L-methionine biosynthesis via de novo pathway; L-homoserine from L-aspartate: step 3/3. It participates in amino-acid biosynthesis; L-threonine biosynthesis; L-threonine from L-aspartate: step 1/5. The protein operates within amino-acid biosynthesis; L-threonine biosynthesis; L-threonine from L-aspartate: step 3/5. Bifunctional aspartate kinase and homoserine dehydrogenase that catalyzes the first and the third steps toward the synthesis of lysine, methionine and threonine from aspartate. In Zea mays (Maize), this protein is Bifunctional aspartokinase/homoserine dehydrogenase 1, chloroplastic (AKHSDH1).